Reading from the N-terminus, the 338-residue chain is Lipoate-protein ligase A (338 aa).

The BPL/LPL catalytic domain occupies 29–216 (PATQRVLFLW…AFFAHYGERV (188 aa)). Residues arginine 71, 76-79 (GAVF), and lysine 134 contribute to the ATP site. (R)-lipoate is bound at residue lysine 134.

It belongs to the LplA family. In terms of assembly, monomer.

The protein localises to the cytoplasm. The enzyme catalyses L-lysyl-[lipoyl-carrier protein] + (R)-lipoate + ATP = N(6)-[(R)-lipoyl]-L-lysyl-[lipoyl-carrier protein] + AMP + diphosphate + H(+). It functions in the pathway protein modification; protein lipoylation via exogenous pathway; protein N(6)-(lipoyl)lysine from lipoate: step 1/2. It participates in protein modification; protein lipoylation via exogenous pathway; protein N(6)-(lipoyl)lysine from lipoate: step 2/2. Its function is as follows. Catalyzes both the ATP-dependent activation of exogenously supplied lipoate to lipoyl-AMP and the transfer of the activated lipoyl onto the lipoyl domains of lipoate-dependent enzymes. The chain is Lipoate-protein ligase A from Shigella boydii serotype 18 (strain CDC 3083-94 / BS512).